We begin with the raw amino-acid sequence, 264 residues long: Thymidylate synthase (264 aa).

A dUMP-binding site is contributed by Arg-21. Residue His-51 participates in (6R)-5,10-methylene-5,6,7,8-tetrahydrofolate binding. 126 to 127 is a dUMP binding site; the sequence is RR. Cys-146 (nucleophile) is an active-site residue. Residues 166-169, Asn-177, and 207-209 each bind dUMP; these read RSGD and HIY. Asp-169 provides a ligand contact to (6R)-5,10-methylene-5,6,7,8-tetrahydrofolate. Ala-263 lines the (6R)-5,10-methylene-5,6,7,8-tetrahydrofolate pocket.

The protein belongs to the thymidylate synthase family. Bacterial-type ThyA subfamily. In terms of assembly, homodimer.

The protein resides in the cytoplasm. The enzyme catalyses dUMP + (6R)-5,10-methylene-5,6,7,8-tetrahydrofolate = 7,8-dihydrofolate + dTMP. Its pathway is pyrimidine metabolism; dTTP biosynthesis. Its function is as follows. Catalyzes the reductive methylation of 2'-deoxyuridine-5'-monophosphate (dUMP) to 2'-deoxythymidine-5'-monophosphate (dTMP) while utilizing 5,10-methylenetetrahydrofolate (mTHF) as the methyl donor and reductant in the reaction, yielding dihydrofolate (DHF) as a by-product. This enzymatic reaction provides an intracellular de novo source of dTMP, an essential precursor for DNA biosynthesis. The chain is Thymidylate synthase from Sinorhizobium medicae (strain WSM419) (Ensifer medicae).